The sequence spans 411 residues: Alpha-1-antiproteinase (411 aa).

The N-terminal stretch at 1–24 is a signal peptide; it reads MAPSISRGLLLLAALCCLAPSFLA. At Ser-33 the chain carries Phosphoserine. Residues Asn-64, Asn-101, and Asn-265 are each glycosylated (N-linked (GlcNAc...) asparagine). Residues 367-386 form an RCL region; the sequence is GATVVEAVPMSLPPQVKFDH. At Ser-377 the chain carries Phosphoserine.

Belongs to the serpin family. In terms of assembly, interacts with CELA2A. Interacts with ERGIC3 and LMAN1/ERGIC53. Interacts with PRSS1/Trypsin. As to expression, plasma.

The protein resides in the secreted. Its function is as follows. Inhibitor of serine proteases. The primary target is elastase, but also has a moderate affinity for plasmin and thrombin. The chain is Alpha-1-antiproteinase (Serpina1) from Rattus norvegicus (Rat).